The primary structure comprises 520 residues: GMP synthase [glutamine-hydrolyzing] (520 aa).

The Glutamine amidotransferase type-1 domain occupies 9 to 202; that stretch reads TILIIDFGSQ…VHRIVGVKPG (194 aa). Cys-86 serves as the catalytic Nucleophile. Residues His-176 and Glu-178 contribute to the active site. In terms of domain architecture, GMPS ATP-PPase spans 203–395; it reads WTMGAYREQA…LGLPDSFIGR (193 aa). Position 230 to 236 (230 to 236) interacts with ATP; that stretch reads SGGVDSS.

Homodimer.

The enzyme catalyses XMP + L-glutamine + ATP + H2O = GMP + L-glutamate + AMP + diphosphate + 2 H(+). Its pathway is purine metabolism; GMP biosynthesis; GMP from XMP (L-Gln route): step 1/1. In terms of biological role, catalyzes the synthesis of GMP from XMP. This is GMP synthase [glutamine-hydrolyzing] from Brucella abortus (strain S19).